Consider the following 846-residue polypeptide: DNA mismatch repair protein MutS (846 aa).

ATP is bound at residue 610-617; that stretch reads GPNMGGKS.

This sequence belongs to the DNA mismatch repair MutS family.

In terms of biological role, this protein is involved in the repair of mismatches in DNA. It is possible that it carries out the mismatch recognition step. This protein has a weak ATPase activity. The sequence is that of DNA mismatch repair protein MutS from Legionella pneumophila (strain Lens).